Consider the following 87-residue polypeptide: MVRSRWKGIYVAKELQNYNTVSNPTIVTTERSSVIIPYYLSKTIYVYNGRKYVGVKITEKSLGRKLGEYVLTKKVEKYKASKKVKKK.

The protein belongs to the universal ribosomal protein uS19 family.

The protein localises to the mitochondrion. The sequence is that of Small ribosomal subunit protein uS19m (mrps19) from Dictyostelium citrinum (Slime mold).